The following is a 252-amino-acid chain: 3-deoxy-manno-octulosonate cytidylyltransferase (252 aa).

Belongs to the KdsB family.

It localises to the cytoplasm. The catalysed reaction is 3-deoxy-alpha-D-manno-oct-2-ulosonate + CTP = CMP-3-deoxy-beta-D-manno-octulosonate + diphosphate. It functions in the pathway nucleotide-sugar biosynthesis; CMP-3-deoxy-D-manno-octulosonate biosynthesis; CMP-3-deoxy-D-manno-octulosonate from 3-deoxy-D-manno-octulosonate and CTP: step 1/1. It participates in bacterial outer membrane biogenesis; lipopolysaccharide biosynthesis. Its function is as follows. Activates KDO (a required 8-carbon sugar) for incorporation into bacterial lipopolysaccharide in Gram-negative bacteria. This chain is 3-deoxy-manno-octulosonate cytidylyltransferase, found in Rhodospirillum rubrum (strain ATCC 11170 / ATH 1.1.1 / DSM 467 / LMG 4362 / NCIMB 8255 / S1).